Reading from the N-terminus, the 159-residue chain is Small ribosomal subunit protein uS17x (159 aa).

This sequence belongs to the universal ribosomal protein uS17 family.

It is found in the cytoplasm. The sequence is that of Small ribosomal subunit protein uS17x (RPS11C) from Arabidopsis thaliana (Mouse-ear cress).